Consider the following 287-residue polypeptide: BURP domain-containing protein 2 (287 aa).

Residues 1-21 (MARSLAALLLLLVAAAGASHA) form the signal peptide. Positions 67 to 287 (FFLEKDLFPG…PQDDMLWVRN (221 aa)) constitute a BURP domain.

As to expression, expressed in shoot.

The protein is BURP domain-containing protein 2 (BURP2) of Oryza sativa subsp. japonica (Rice).